A 294-amino-acid polypeptide reads, in one-letter code: Homeobox-leucine zipper protein ATHB-16 (294 aa).

The segment covering 1–20 (MKRLSSSDSMCGLISTSTDE) has biased composition (polar residues). Residues 1 to 31 (MKRLSSSDSMCGLISTSTDEQSPRGYGSNYQ) are disordered. Positions 56 to 115 (LSEKKRRLKVDQVKALEKNFELENKLEPERKTKLAQELGLQPRQVAVWFQNRRARWKTKQ) form a DNA-binding region, homeobox. The tract at residues 116-151 (LEKDYGVLKGQYDSLRHNFDSLRRDNDSLLQEISKI) is leucine-zipper. Residues 219–238 (SSDSCDSSAVLNDETSSDNG) are compositionally biased toward polar residues. The tract at residues 219-241 (SSDSCDSSAVLNDETSSDNGRLT) is disordered.

The protein belongs to the HD-ZIP homeobox family. Class I subfamily. As to expression, widely expressed with a lower level in siliques.

Its subcellular location is the nucleus. In terms of biological role, probable transcription factor that may function as a negative regulator of the flowering time response to photoperiod. May act to repress cell expansion during plant development. The polypeptide is Homeobox-leucine zipper protein ATHB-16 (ATHB-16) (Arabidopsis thaliana (Mouse-ear cress)).